The chain runs to 1158 residues: ATP-dependent helicase/deoxyribonuclease subunit B (1158 aa).

A UvrD-like helicase ATP-binding domain is found at Met-1 to Asn-275. An ATP-binding site is contributed by Gly-8–Ser-15. The region spanning Asn-269 to Val-583 is the UvrD-like helicase C-terminal domain. [4Fe-4S] cluster is bound by residues Cys-784, Cys-1112, Cys-1115, and Cys-1121.

Belongs to the helicase family. AddB/RexB type 1 subfamily. As to quaternary structure, heterodimer of AddA and AddB. Requires Mg(2+) as cofactor. It depends on [4Fe-4S] cluster as a cofactor.

In terms of biological role, the heterodimer acts as both an ATP-dependent DNA helicase and an ATP-dependent, dual-direction single-stranded exonuclease. Recognizes the chi site generating a DNA molecule suitable for the initiation of homologous recombination. The AddB subunit has 5' -&gt; 3' nuclease activity but not helicase activity. The polypeptide is ATP-dependent helicase/deoxyribonuclease subunit B (Staphylococcus aureus (strain MRSA252)).